A 172-amino-acid chain; its full sequence is 3-hydroxydecanoyl-[acyl-carrier-protein] dehydratase (172 aa).

His-71 is a catalytic residue.

Belongs to the thioester dehydratase family. FabA subfamily. In terms of assembly, homodimer.

The protein localises to the cytoplasm. It catalyses the reaction a (3R)-hydroxyacyl-[ACP] = a (2E)-enoyl-[ACP] + H2O. The enzyme catalyses (3R)-hydroxydecanoyl-[ACP] = (2E)-decenoyl-[ACP] + H2O. It carries out the reaction (2E)-decenoyl-[ACP] = (3Z)-decenoyl-[ACP]. Its pathway is lipid metabolism; fatty acid biosynthesis. Its function is as follows. Necessary for the introduction of cis unsaturation into fatty acids. Catalyzes the dehydration of (3R)-3-hydroxydecanoyl-ACP to E-(2)-decenoyl-ACP and then its isomerization to Z-(3)-decenoyl-ACP. Can catalyze the dehydratase reaction for beta-hydroxyacyl-ACPs with saturated chain lengths up to 16:0, being most active on intermediate chain length. The sequence is that of 3-hydroxydecanoyl-[acyl-carrier-protein] dehydratase from Brucella abortus (strain S19).